The chain runs to 31 residues: Cytochrome b6-f complex subunit 6 (31 aa).

A helical transmembrane segment spans residues 4–24; that stretch reads ITSYFGFLLAALTLTLALFIG.

Belongs to the PetL family. In terms of assembly, the 4 large subunits of the cytochrome b6-f complex are cytochrome b6, subunit IV (17 kDa polypeptide, PetD), cytochrome f and the Rieske protein, while the 4 small subunits are PetG, PetL, PetM and PetN. The complex functions as a dimer.

It localises to the plastid. The protein resides in the chloroplast thylakoid membrane. Functionally, component of the cytochrome b6-f complex, which mediates electron transfer between photosystem II (PSII) and photosystem I (PSI), cyclic electron flow around PSI, and state transitions. PetL is important for photoautotrophic growth as well as for electron transfer efficiency and stability of the cytochrome b6-f complex. This Oryza sativa subsp. japonica (Rice) protein is Cytochrome b6-f complex subunit 6.